A 209-amino-acid chain; its full sequence is Rac-like GTP-binding protein ARAC7 (209 aa).

13-20 contacts GTP; that stretch reads GDGAVGKT. The Effector region motif lies at 35 to 43; that stretch reads YIPTVFDNF. GTP contacts are provided by residues 60–64 and 118–121; these read DTAGQ and TKLD. 3 S-palmitoyl cysteine lipidation sites follow: Cys196, Cys203, and Cys206.

This sequence belongs to the small GTPase superfamily. Rho family. Post-translationally, although this sequence has a C-terminal -CXXX, it is palmitoylated at Cys-206, rather than prenylated.

The protein localises to the membrane. In terms of biological role, acts as a negative regulator of abscisic acid (ABA) responses. In Arabidopsis thaliana (Mouse-ear cress), this protein is Rac-like GTP-binding protein ARAC7 (ARAC7).